A 252-amino-acid chain; its full sequence is Ribose-5-phosphate isomerase (252 aa).

It belongs to the ribose 5-phosphate isomerase family.

The protein localises to the cytoplasm. It carries out the reaction aldehydo-D-ribose 5-phosphate = D-ribulose 5-phosphate. It functions in the pathway carbohydrate degradation; pentose phosphate pathway; D-ribose 5-phosphate from D-ribulose 5-phosphate (non-oxidative stage): step 1/1. The sequence is that of Ribose-5-phosphate isomerase (RKI1) from Debaryomyces hansenii (strain ATCC 36239 / CBS 767 / BCRC 21394 / JCM 1990 / NBRC 0083 / IGC 2968) (Yeast).